The chain runs to 551 residues: MKKNSSVVFFLVGLSQFVTMAFLIIGSITAPIFKQIGYSKYDEITYGTFGYCKEGSCSKASYNYHPDELSDSDSNWKLNSNARSILGKIIFITPIAAGLNFLGFLCTIMSVLLINVLSSDRVGSASAIMFFVNLTFSTLGFLSASLICIVVFLLFYPHVTWCSWVLIPGAALSLLVIPLIFSAYSRSSGSRDDDETEELEEKGMLLNDPYLSSKSGRFDIDADSEANLRGDSRTNLLGDNFKNGTNITVVPDIISHNQDPKLSNITTSTTSDISTFDKEAKDMENSNGSGLNEEEDDGMAYDKRRSTSTYSVIESESGLKNGSVSNNYVRNNGSNTSNNINYKVPLGKTEISSSASLASSDYSQREVIPHRNPSRLLNDIMETSFNEPNDSHINSMSSYNDKDSTLTSISQRGVNPEVYNQMPRETAAGPANIRPYAGQPHPAPLVYPQQRLQPQQQQPQQQYHQYNLYQRTTPAGPDPSNVILQSNPYFNVAPNQVPQHRNPVPGVGFAPNPLPNQSPITQGYKPAYKRRMQNKNLPRATTSLNNPYGFR.

At 1 to 7 the chain is on the cytoplasmic side; sequence MKKNSSV. Residues 8–28 traverse the membrane as a helical segment; it reads VFFLVGLSQFVTMAFLIIGSI. Residues 29 to 88 lie on the Vacuolar side of the membrane; sequence TAPIFKQIGYSKYDEITYGTFGYCKEGSCSKASYNYHPDELSDSDSNWKLNSNARSILGK. A helical transmembrane segment spans residues 89 to 109; the sequence is IIFITPIAAGLNFLGFLCTIM. Residues 110–135 are Cytoplasmic-facing; that stretch reads SVLLINVLSSDRVGSASAIMFFVNLT. A helical membrane pass occupies residues 136–156; it reads FSTLGFLSASLICIVVFLLFY. Over 157 to 160 the chain is Vacuolar; the sequence is PHVT. Residues 161 to 181 form a helical membrane-spanning segment; it reads WCSWVLIPGAALSLLVIPLIF. At 182 to 551 the chain is on the cytoplasmic side; sequence SAYSRSSGSR…TSLNNPYGFR (370 aa). 2 positions are modified to phosphoserine: Ser224 and Ser232. Residues 280–341 form a disordered region; that stretch reads AKDMENSNGS…NGSNTSNNIN (62 aa). The segment covering 307–320 has biased composition (polar residues); sequence TSTYSVIESESGLK. Positions 321 to 341 are enriched in low complexity; the sequence is NGSVSNNYVRNNGSNTSNNIN. Ser363 is subject to Phosphoserine.

As to quaternary structure, forms homo dimers or homooligomers in MCC microdomains. Interacts with BOI2 and RHO3, two key regulators of secretion.

Its subcellular location is the vacuole membrane. The protein localises to the cell membrane. Functionally, protein involved in secretion and cell wall organization. Contributes to cell surface-related functions as a auxiliary component of MCC/eisosome that specifically interacts with the secretory pathway. This is an uncharacterized protein from Saccharomyces cerevisiae (strain ATCC 204508 / S288c) (Baker's yeast).